The sequence spans 471 residues: V-type ATP synthase beta chain (471 aa).

It belongs to the ATPase alpha/beta chains family.

In terms of biological role, produces ATP from ADP in the presence of a proton gradient across the membrane. The V-type beta chain is a regulatory subunit. In Deinococcus radiodurans (strain ATCC 13939 / DSM 20539 / JCM 16871 / CCUG 27074 / LMG 4051 / NBRC 15346 / NCIMB 9279 / VKM B-1422 / R1), this protein is V-type ATP synthase beta chain (atpB).